The sequence spans 288 residues: 11-beta-hydroxysteroid dehydrogenase 1 (288 aa).

Over 1–4 the chain is Cytoplasmic; the sequence is MKKY. Residues 5–20 form a helical; Signal-anchor for type II membrane protein membrane-spanning segment; that stretch reads LLPVLVLCLGYYYSTN. Over 21–288 the chain is Lumenal; that stretch reads EEFRPEMLQG…SYNRDLFVSN (268 aa). Residues 37-63, 88-89, and 115-117 each bind NADP(+); these read GASK…TARS, TM, and NHI. An N-linked (GlcNAc...) asparagine glycan is attached at Asn-158. Ser-166 serves as a coordination point for substrate. Tyr-179 (proton acceptor) is an active-site residue. Residue 179–183 participates in NADP(+) binding; that stretch reads YSASK. N-linked (GlcNAc...) asparagine glycosylation is present at Asn-203. NADP(+)-binding positions include 212 to 218 and 214 to 218; these read GFIDTET and IDTET.

Belongs to the short-chain dehydrogenases/reductases (SDR) family. Homodimer. Glycosylated. Liver, kidney, lung and testis. Brain. Expressed in liver (at protein level).

Its subcellular location is the endoplasmic reticulum membrane. It catalyses the reaction an 11beta-hydroxysteroid + NADP(+) = an 11-oxosteroid + NADPH + H(+). The enzyme catalyses corticosterone + NADP(+) = 11-dehydrocorticosterone + NADPH + H(+). It carries out the reaction a 7beta-hydroxysteroid + NADP(+) = a 7-oxosteroid + NADPH + H(+). The catalysed reaction is 7-oxocholesterol + NADPH + H(+) = 7beta-hydroxycholesterol + NADP(+). It catalyses the reaction chenodeoxycholate + NADP(+) = 7-oxolithocholate + NADPH + H(+). The enzyme catalyses 7-oxolithocholate + NADPH + H(+) = ursodeoxycholate + NADP(+). It carries out the reaction glycochenodeoxycholate + NADP(+) = 7-oxoglycolithocholate + NADPH + H(+). The catalysed reaction is taurochenodeoxycholate + NADP(+) = 7-oxotaurolithocholate + NADPH + H(+). It catalyses the reaction tauroursodeoxycholate + NADP(+) = 7-oxotaurolithocholate + NADPH + H(+). The enzyme catalyses glycoursodeoxycholate + NADP(+) = 7-oxoglycolithocholate + NADPH + H(+). It carries out the reaction 7-oxopregnenolone + NADPH + H(+) = 7beta-hydroxypregnenolone + NADP(+). The catalysed reaction is 3beta,7alpha-dihydroxyandrost-5-en-17-one + NADP(+) = 3beta-hydroxy-5-androstene-7,17-dione + NADPH + H(+). It catalyses the reaction 3beta-hydroxy-5-androstene-7,17-dione + NADPH + H(+) = 3beta,7beta-dihydroxyandrost-5-en-17-one + NADP(+). The enzyme catalyses 3beta-hydroxy-5alpha-androstane-7,17-dione + NADPH + H(+) = 3beta,7beta-dihydroxy-5alpha-androstan-17-one + NADP(+). Controls the reversible conversion of biologically active glucocorticoids such as 11-dehydrocorticosterone to corticosterone using NADP(H). Participates in the corticosteroid receptor-mediated anti-inflammatory response, as well as metabolic and homeostatic processes. Bidirectional in vitro, predominantly functions as a reductase in vivo, thereby increasing the concentration of active glucocorticoids. It has broad substrate specificity, besides glucocorticoids, it accepts other steroid and sterol substrates. Interconverts 7-oxo- and 7-hydroxy-neurosteroids such as 7-oxopregnenolone and 7beta-hydroxypregnenolone, 7-oxodehydroepiandrosterone (3beta-hydroxy-5-androstene-7,17-dione) and 7beta-hydroxydehydroepiandrosterone (3beta,7beta-dihydroxyandrost-5-en-17-one), among others. Catalyzes the stereo-specific conversion of the major dietary oxysterol, 7-ketocholesterol (7-oxocholesterol), into the more polar 7-beta-hydroxycholesterol metabolite. 7-oxocholesterol is one of the most important oxysterols, it participates in several events such as induction of apoptosis, accumulation in atherosclerotic lesions, lipid peroxidation, and induction of foam cell formation. Mediates the 7-oxo reduction of 7-oxolithocholate mainly to chenodeoxycholate, and to a lesser extent to ursodeoxycholate, both in its free form and when conjugated to glycine or taurine, providing a link between glucocorticoid activation and bile acid metabolism. Catalyzes the synthesis of 7-beta-25-dihydroxycholesterol from 7-oxo-25-hydroxycholesterol in vitro, which acts as a ligand for the G-protein-coupled receptor (GPCR) Epstein-Barr virus-induced gene 2 (EBI2) and may thereby regulate immune cell migration. This Rattus norvegicus (Rat) protein is 11-beta-hydroxysteroid dehydrogenase 1.